Here is a 278-residue protein sequence, read N- to C-terminus: 4-hydroxy-tetrahydrodipicolinate reductase (278 aa).

Residues 13–18 and 111–113 contribute to the NAD(+) site; these read GAAGKM and GTT. His167 acts as the Proton donor/acceptor in catalysis. His168 is a binding site for (S)-2,3,4,5-tetrahydrodipicolinate. Lys171 (proton donor) is an active-site residue. 177 to 178 is a (S)-2,3,4,5-tetrahydrodipicolinate binding site; the sequence is GT.

This sequence belongs to the DapB family.

Its subcellular location is the cytoplasm. The catalysed reaction is (S)-2,3,4,5-tetrahydrodipicolinate + NAD(+) + H2O = (2S,4S)-4-hydroxy-2,3,4,5-tetrahydrodipicolinate + NADH + H(+). It catalyses the reaction (S)-2,3,4,5-tetrahydrodipicolinate + NADP(+) + H2O = (2S,4S)-4-hydroxy-2,3,4,5-tetrahydrodipicolinate + NADPH + H(+). The protein operates within amino-acid biosynthesis; L-lysine biosynthesis via DAP pathway; (S)-tetrahydrodipicolinate from L-aspartate: step 4/4. In terms of biological role, catalyzes the conversion of 4-hydroxy-tetrahydrodipicolinate (HTPA) to tetrahydrodipicolinate. In Mastigocladus laminosus (Fischerella sp.), this protein is 4-hydroxy-tetrahydrodipicolinate reductase.